Here is a 214-residue protein sequence, read N- to C-terminus: tRNA (guanine-N(7)-)-methyltransferase (214 aa).

Residues glutamate 43, glutamate 68, aspartate 95, and aspartate 117 each coordinate S-adenosyl-L-methionine. Aspartate 117 is a catalytic residue. Substrate is bound by residues lysine 121, aspartate 153, and 191–194 (TEYE).

Belongs to the class I-like SAM-binding methyltransferase superfamily. TrmB family.

The catalysed reaction is guanosine(46) in tRNA + S-adenosyl-L-methionine = N(7)-methylguanosine(46) in tRNA + S-adenosyl-L-homocysteine. Its pathway is tRNA modification; N(7)-methylguanine-tRNA biosynthesis. Functionally, catalyzes the formation of N(7)-methylguanine at position 46 (m7G46) in tRNA. In Lachnoclostridium phytofermentans (strain ATCC 700394 / DSM 18823 / ISDg) (Clostridium phytofermentans), this protein is tRNA (guanine-N(7)-)-methyltransferase.